The chain runs to 956 residues: Bifunctional glutamine synthetase adenylyltransferase/adenylyl-removing enzyme (956 aa).

The segment at 1-450 is adenylyl removase; it reads MENMSEQALP…YFKETVGGQE (450 aa). Positions 456-956 are adenylyl transferase; sequence EQWTAQLWSL…IYEQVLNNGQ (501 aa).

This sequence belongs to the GlnE family. Mg(2+) is required as a cofactor.

It catalyses the reaction [glutamine synthetase]-O(4)-(5'-adenylyl)-L-tyrosine + phosphate = [glutamine synthetase]-L-tyrosine + ADP. It carries out the reaction [glutamine synthetase]-L-tyrosine + ATP = [glutamine synthetase]-O(4)-(5'-adenylyl)-L-tyrosine + diphosphate. Its function is as follows. Involved in the regulation of glutamine synthetase GlnA, a key enzyme in the process to assimilate ammonia. When cellular nitrogen levels are high, the C-terminal adenylyl transferase (AT) inactivates GlnA by covalent transfer of an adenylyl group from ATP to specific tyrosine residue of GlnA, thus reducing its activity. Conversely, when nitrogen levels are low, the N-terminal adenylyl removase (AR) activates GlnA by removing the adenylyl group by phosphorolysis, increasing its activity. The regulatory region of GlnE binds the signal transduction protein PII (GlnB) which indicates the nitrogen status of the cell. This Shewanella loihica (strain ATCC BAA-1088 / PV-4) protein is Bifunctional glutamine synthetase adenylyltransferase/adenylyl-removing enzyme.